Consider the following 329-residue polypeptide: Ribosomal RNA small subunit methyltransferase C (329 aa).

The protein belongs to the methyltransferase superfamily. RsmC family. In terms of assembly, monomer.

The protein resides in the cytoplasm. It carries out the reaction guanosine(1207) in 16S rRNA + S-adenosyl-L-methionine = N(2)-methylguanosine(1207) in 16S rRNA + S-adenosyl-L-homocysteine + H(+). In terms of biological role, specifically methylates the guanine in position 1207 of 16S rRNA in the 30S particle. The polypeptide is Ribosomal RNA small subunit methyltransferase C (Actinobacillus pleuropneumoniae serotype 7 (strain AP76)).